Consider the following 202-residue polypeptide: 3-isopropylmalate dehydratase small subunit (202 aa).

It belongs to the LeuD family. LeuD type 1 subfamily. In terms of assembly, heterodimer of LeuC and LeuD.

The enzyme catalyses (2R,3S)-3-isopropylmalate = (2S)-2-isopropylmalate. It functions in the pathway amino-acid biosynthesis; L-leucine biosynthesis; L-leucine from 3-methyl-2-oxobutanoate: step 2/4. Catalyzes the isomerization between 2-isopropylmalate and 3-isopropylmalate, via the formation of 2-isopropylmaleate. This chain is 3-isopropylmalate dehydratase small subunit, found in Rhizobium johnstonii (strain DSM 114642 / LMG 32736 / 3841) (Rhizobium leguminosarum bv. viciae).